The sequence spans 655 residues: p-hydroxybenzoic acid efflux pump subunit AaeB (655 aa).

Transmembrane regions (helical) follow at residues Phe13–Leu33, Trp38–Pro58, Leu69–Ile89, Leu93–Val113, Trp121–Leu141, Glu152–Ile172, Leu370–Val390, Phe407–Pro427, Gln431–Val451, Met459–Phe479, and Phe482–Leu502.

The protein belongs to the aromatic acid exporter ArAE (TC 2.A.85) family.

The protein localises to the cell inner membrane. Forms an efflux pump with AaeA. Could function as a metabolic relief valve, allowing to eliminate certain compounds when they accumulate to high levels in the cell. In Shigella boydii serotype 18 (strain CDC 3083-94 / BS512), this protein is p-hydroxybenzoic acid efflux pump subunit AaeB.